A 424-amino-acid chain; its full sequence is Catabolic NAD-specific glutamate dehydrogenase RocG (424 aa).

The substrate site is built by Lys-80 and Lys-104. Residue Lys-116 is the Proton donor of the active site. Thr-200 and Asn-231 together coordinate NAD(+). Ser-358 is a binding site for substrate.

Belongs to the Glu/Leu/Phe/Val dehydrogenases family. Homohexamer. Interacts with transcriptional regulator GltC.

It carries out the reaction L-glutamate + NAD(+) + H2O = 2-oxoglutarate + NH4(+) + NADH + H(+). In terms of biological role, devoted to catabolic function of glutamate (and other amino acids of the glutamate family) utilization as sole nitrogen source. It is not involved in anabolic function of glutamate biosynthesis since B.subtilis possesses only one route of glutamate biosynthesis from ammonia, catalyzed by glutamate synthase. Wild-type cells are unable to utilize glutamate or glutamine as a sole carbon source; thus RocG does not function physiologically to synthesize glutamate, but it is involved in the utilization of arginine, and proline as carbon or nitrogen source. The catabolic RocG is essential for controlling gltAB expression via an inhibitory interactions with the transcriptional regulator GltC in response to the availability of sugars. This is Catabolic NAD-specific glutamate dehydrogenase RocG from Bacillus subtilis (strain 168).